Here is a 494-residue protein sequence, read N- to C-terminus: Putative glucuronosyltransferase PGSIP7 (494 aa).

A helical transmembrane segment spans residues 4 to 24 (QRTLMFSCWVLSLLIIKTTAY). Positions 161 and 163 each coordinate Mn(2+). The next 5 helical transmembrane spans lie at 316–336 (YSAE…IILV), 362–382 (AFKF…FFII), 389–409 (LIGW…PINA), 410–430 (FLLP…TLLV), and 444–464 (LSVF…FVKI).

The protein belongs to the glycosyltransferase 8 family. Glycogenin subfamily. The cofactor is Mn(2+).

It localises to the membrane. The polypeptide is Putative glucuronosyltransferase PGSIP7 (PGSIP7) (Arabidopsis thaliana (Mouse-ear cress)).